We begin with the raw amino-acid sequence, 1057 residues long: Structural maintenance of chromosomes protein 6B (1057 aa).

The Zinc-hook domain maps to 22–1047 (ILRIKVENFM…ISMVKSHERI (1026 aa)). Residue 49–56 (GQNGSGKS) coordinates ATP. A coiled-coil region spans residues 135 to 448 (KVSNKRDELR…NDLKKHQTNK (314 aa)). Residues 449–632 (VTAFGGDRVI…PPLSRRPSRL (184 aa)) form a flexible hinge region. Positions 633–904 (CASFDDQIKD…QDHREKLMAC (272 aa)) form a coiled coil. Basic and acidic residues predominate over residues 818 to 828 (KNKRKESDQKA). Residues 818–845 (KNKRKESDQKASEICPESEIESLGPWDG) are disordered.

Belongs to the SMC family. SMC6 subfamily. As to quaternary structure, forms a heterodimer with SMC5. The SMC5-SMC6 complex is composed of the SMC5 and SMC6 heterodimer attached via their hinge domain and from the non-SMC subunit NSE4A or NSE4B. In terms of tissue distribution, expressed in seedlings, rosette leaves and floral buds.

The protein resides in the nucleus. Its subcellular location is the chromosome. In terms of biological role, core component of the SMC5-SMC6 complex that promotes sister chromatid alignment after DNA damage and facilitates double-stranded DNA breaks (DSBs) repair via homologous recombination between sister chromatids. In Arabidopsis thaliana (Mouse-ear cress), this protein is Structural maintenance of chromosomes protein 6B (SMC6B).